The sequence spans 387 residues: Queuine tRNA-ribosyltransferase (387 aa).

Asp102 acts as the Proton acceptor in catalysis. Substrate is bound by residues 102 to 106 (DSGGF), Asp156, Gln205, and Gly232. Residues 263–269 (GVGTPED) are RNA binding. Asp282 acts as the Nucleophile in catalysis. The segment at 287–291 (TRNAR) is RNA binding; important for wobble base 34 recognition. Residues Cys320, Cys322, Cys325, and His351 each coordinate Zn(2+).

The protein belongs to the queuine tRNA-ribosyltransferase family. In terms of assembly, homodimer. Within each dimer, one monomer is responsible for RNA recognition and catalysis, while the other monomer binds to the replacement base PreQ1. Zn(2+) serves as cofactor.

The catalysed reaction is 7-aminomethyl-7-carbaguanine + guanosine(34) in tRNA = 7-aminomethyl-7-carbaguanosine(34) in tRNA + guanine. It participates in tRNA modification; tRNA-queuosine biosynthesis. Its function is as follows. Catalyzes the base-exchange of a guanine (G) residue with the queuine precursor 7-aminomethyl-7-deazaguanine (PreQ1) at position 34 (anticodon wobble position) in tRNAs with GU(N) anticodons (tRNA-Asp, -Asn, -His and -Tyr). Catalysis occurs through a double-displacement mechanism. The nucleophile active site attacks the C1' of nucleotide 34 to detach the guanine base from the RNA, forming a covalent enzyme-RNA intermediate. The proton acceptor active site deprotonates the incoming PreQ1, allowing a nucleophilic attack on the C1' of the ribose to form the product. After dissociation, two additional enzymatic reactions on the tRNA convert PreQ1 to queuine (Q), resulting in the hypermodified nucleoside queuosine (7-(((4,5-cis-dihydroxy-2-cyclopenten-1-yl)amino)methyl)-7-deazaguanosine). In Polaromonas naphthalenivorans (strain CJ2), this protein is Queuine tRNA-ribosyltransferase.